The primary structure comprises 880 residues: Valine--tRNA ligase (880 aa).

The short motif at 49-59 (PNVTGKLHLGH) is the 'HIGH' region element. Positions 525 to 529 (KMSKS) match the 'KMSKS' region motif. Residue lysine 528 participates in ATP binding. A coiled-coil region spans residues 809–880 (LEGLINIDEE…VEKRIAELKN (72 aa)).

The protein belongs to the class-I aminoacyl-tRNA synthetase family. ValS type 1 subfamily. Monomer.

Its subcellular location is the cytoplasm. The catalysed reaction is tRNA(Val) + L-valine + ATP = L-valyl-tRNA(Val) + AMP + diphosphate. Its function is as follows. Catalyzes the attachment of valine to tRNA(Val). As ValRS can inadvertently accommodate and process structurally similar amino acids such as threonine, to avoid such errors, it has a 'posttransfer' editing activity that hydrolyzes mischarged Thr-tRNA(Val) in a tRNA-dependent manner. The protein is Valine--tRNA ligase of Bacillus licheniformis (strain ATCC 14580 / DSM 13 / JCM 2505 / CCUG 7422 / NBRC 12200 / NCIMB 9375 / NCTC 10341 / NRRL NRS-1264 / Gibson 46).